Consider the following 157-residue polypeptide: Small ribosomal subunit protein uS7 (157 aa).

Belongs to the universal ribosomal protein uS7 family. In terms of assembly, part of the 30S ribosomal subunit. Contacts proteins S9 and S11.

Its function is as follows. One of the primary rRNA binding proteins, it binds directly to 16S rRNA where it nucleates assembly of the head domain of the 30S subunit. Is located at the subunit interface close to the decoding center, probably blocks exit of the E-site tRNA. The sequence is that of Small ribosomal subunit protein uS7 from Leptospira borgpetersenii serovar Hardjo-bovis (strain JB197).